The following is a 330-amino-acid chain: Ketol-acid reductoisomerase (NADP(+)) (330 aa).

One can recognise a KARI N-terminal Rossmann domain in the interval 1–181; the sequence is MNVYYEKDAD…GGTKAGVIET (181 aa). NADP(+) contacts are provided by residues 24–27, Arg47, Ser50, Ser52, and 82–85; these read YGSQ and DQNQ. Residue His107 is part of the active site. Gly133 lines the NADP(+) pocket. The KARI C-terminal knotted domain maps to 182–327; the sequence is NFKNETETDL…AKLRNMMSWL (146 aa). Residues Asp190, Glu194, Glu226, and Glu230 each coordinate Mg(2+). Ser251 lines the substrate pocket.

This sequence belongs to the ketol-acid reductoisomerase family. Mg(2+) serves as cofactor.

The enzyme catalyses (2R)-2,3-dihydroxy-3-methylbutanoate + NADP(+) = (2S)-2-acetolactate + NADPH + H(+). It carries out the reaction (2R,3R)-2,3-dihydroxy-3-methylpentanoate + NADP(+) = (S)-2-ethyl-2-hydroxy-3-oxobutanoate + NADPH + H(+). Its pathway is amino-acid biosynthesis; L-isoleucine biosynthesis; L-isoleucine from 2-oxobutanoate: step 2/4. It functions in the pathway amino-acid biosynthesis; L-valine biosynthesis; L-valine from pyruvate: step 2/4. Functionally, involved in the biosynthesis of branched-chain amino acids (BCAA). Catalyzes an alkyl-migration followed by a ketol-acid reduction of (S)-2-acetolactate (S2AL) to yield (R)-2,3-dihydroxy-isovalerate. In the isomerase reaction, S2AL is rearranged via a Mg-dependent methyl migration to produce 3-hydroxy-3-methyl-2-ketobutyrate (HMKB). In the reductase reaction, this 2-ketoacid undergoes a metal-dependent reduction by NADPH to yield (R)-2,3-dihydroxy-isovalerate. This chain is Ketol-acid reductoisomerase (NADP(+)), found in Chlorobium chlorochromatii (strain CaD3).